The chain runs to 86 residues: Large ribosomal subunit protein bL27 (86 aa).

Residues 1 to 22 (MATKKAGGSSRNGRDSAGRRLG) are disordered.

The protein belongs to the bacterial ribosomal protein bL27 family.

This is Large ribosomal subunit protein bL27 from Rickettsia bellii (strain RML369-C).